Reading from the N-terminus, the 410-residue chain is 3-phenylpropionate/cinnamic acid dioxygenase ferredoxin--NAD(+) reductase component (410 aa).

Residue 5–36 (TIIIVGGGQAAAMAAASLRQQGFTGELHLFSD) coordinates FAD. Residue 146-184 (SVVIVGAGTIGLELAASATQRSAAQRSAAQRRCKVTVIE) participates in NAD(+) binding.

Belongs to the bacterial ring-hydroxylating dioxygenase ferredoxin reductase family. This dioxygenase system consists of four proteins: the two subunits of the hydroxylase component (HcaE and HcaF), a ferredoxin (HcaC) and a ferredoxin reductase (HcaD). FAD is required as a cofactor.

The enzyme catalyses 2 reduced [2Fe-2S]-[ferredoxin] + NAD(+) + H(+) = 2 oxidized [2Fe-2S]-[ferredoxin] + NADH. Its pathway is aromatic compound metabolism; 3-phenylpropanoate degradation. Functionally, part of the multicomponent 3-phenylpropionate dioxygenase, that converts 3-phenylpropionic acid (PP) and cinnamic acid (CI) into 3-phenylpropionate-dihydrodiol (PP-dihydrodiol) and cinnamic acid-dihydrodiol (CI-dihydrodiol), respectively. The protein is 3-phenylpropionate/cinnamic acid dioxygenase ferredoxin--NAD(+) reductase component of Shigella flexneri serotype 5b (strain 8401).